Consider the following 375-residue polypeptide: Solute carrier family 35 member F2 (375 aa).

Met1 is modified (N-acetylmethionine). A phosphoserine mark is found at Ser5, Ser22, Ser25, and Ser28. 10 helical membrane-spanning segments follow: residues 39–59, 73–93, 108–126, 136–156, 165–185, 195–215, 227–247, 263–283, 290–310, and 314–334; these read ILKT…TAIT, MLQS…MLAF, WWKY…YLIV, SVQL…WFIL, FIAV…DILA, VLIG…SNVC, EFLG…LLIV, LLFV…PLVI, SVNL…LFLF, and FSGL…LYCS. Phosphoserine is present on Ser372.

Belongs to the SLC35F solute transporter family.

It localises to the membrane. Functionally, putative solute transporter. In Mus musculus (Mouse), this protein is Solute carrier family 35 member F2 (Slc35f2).